Reading from the N-terminus, the 212-residue chain is 3,4-dihydroxy-2-butanone 4-phosphate synthase (212 aa).

Residues R37–E38, D42, R150–T154, and E174 each bind D-ribulose 5-phosphate. E38 is a Mg(2+) binding site. Mg(2+) is bound at residue H153.

Belongs to the DHBP synthase family. Homodimer. Mg(2+) serves as cofactor. The cofactor is Mn(2+).

It catalyses the reaction D-ribulose 5-phosphate = (2S)-2-hydroxy-3-oxobutyl phosphate + formate + H(+). It participates in cofactor biosynthesis; riboflavin biosynthesis; 2-hydroxy-3-oxobutyl phosphate from D-ribulose 5-phosphate: step 1/1. In terms of biological role, catalyzes the conversion of D-ribulose 5-phosphate to formate and 3,4-dihydroxy-2-butanone 4-phosphate. In Shewanella pealeana (strain ATCC 700345 / ANG-SQ1), this protein is 3,4-dihydroxy-2-butanone 4-phosphate synthase.